Consider the following 524-residue polypeptide: GMP synthase [glutamine-hydrolyzing] (524 aa).

The Glutamine amidotransferase type-1 domain occupies 12 to 201 (TILVLDFGSQ…AVDICKASQS (190 aa)). Residue cysteine 88 is the Nucleophile of the active site. Active-site residues include histidine 175 and glutamate 177. One can recognise a GMPS ATP-PPase domain in the interval 202–399 (WNMENFIDTE…LGISHELVWR (198 aa)). 230–236 (SGGVDST) contacts ATP. 4 residues coordinate XMP: arginine 303, aspartate 461, lysine 516, and glutamate 522.

As to quaternary structure, homodimer. Mg(2+) is required as a cofactor.

Its subcellular location is the cytoplasm. The protein localises to the cytosol. The catalysed reaction is XMP + L-glutamine + ATP + H2O = GMP + L-glutamate + AMP + diphosphate + 2 H(+). It participates in purine metabolism; GMP biosynthesis; GMP from XMP (L-Gln route): step 1/1. Its function is as follows. Catalyzes the conversion of xanthine monophosphate (XMP) to GMP in the presence of glutamine and ATP through an adenyl-XMP intermediate. The chain is GMP synthase [glutamine-hydrolyzing] (GUA1) from Kluyveromyces lactis (strain ATCC 8585 / CBS 2359 / DSM 70799 / NBRC 1267 / NRRL Y-1140 / WM37) (Yeast).